Here is a 113-residue protein sequence, read N- to C-terminus: uncharacterized protein (113 aa).

The next 2 membrane-spanning stretches (helical) occupy residues 25 to 45 (FGFC…CFII) and 49 to 69 (FEVE…LSVW).

The protein resides in the host membrane. This is an uncharacterized protein from Spiroplasma citri (SpV1).